Consider the following 456-residue polypeptide: Chordin-like protein 1 (456 aa).

The N-terminal stretch at Met1–Leu28 is a signal peptide. 3 consecutive VWFC domains span residues Thr36–Pro101, Lys115–Arg181, and Arg262–Pro327. A glycan (N-linked (GlcNAc...) asparagine) is linked at Asn120. The short motif at Arg181 to Asp183 is the Cell attachment site element. A glycan (N-linked (GlcNAc...) asparagine) is linked at Asn295.

As to expression, mainly expressed in the ventral retina.

Its subcellular location is the secreted. Functionally, seems to antagonize the function of BMP4 by binding to it and preventing its interaction with receptors. The polypeptide is Chordin-like protein 1 (CHRDL1) (Gallus gallus (Chicken)).